The sequence spans 466 residues: Asparagine--tRNA ligase (466 aa).

The protein belongs to the class-II aminoacyl-tRNA synthetase family. In terms of assembly, homodimer.

The protein resides in the cytoplasm. It carries out the reaction tRNA(Asn) + L-asparagine + ATP = L-asparaginyl-tRNA(Asn) + AMP + diphosphate + H(+). This is Asparagine--tRNA ligase from Buchnera aphidicola subsp. Schizaphis graminum (strain Sg).